The following is a 188-amino-acid chain: Transcription antitermination protein NusB (188 aa).

Residues 154-188 are disordered; sequence RAANPGAVSGSDAPVAPWDDSEELPAEDEAEDSRP. The span at 172 to 188 shows a compositional bias: acidic residues; it reads DDSEELPAEDEAEDSRP.

This sequence belongs to the NusB family.

Functionally, involved in transcription antitermination. Required for transcription of ribosomal RNA (rRNA) genes. Binds specifically to the boxA antiterminator sequence of the ribosomal RNA (rrn) operons. The sequence is that of Transcription antitermination protein NusB from Corynebacterium efficiens (strain DSM 44549 / YS-314 / AJ 12310 / JCM 11189 / NBRC 100395).